The chain runs to 401 residues: CinA-like protein (401 aa).

Belongs to the CinA family.

In Thermosipho melanesiensis (strain DSM 12029 / CIP 104789 / BI429), this protein is CinA-like protein.